The following is a 376-amino-acid chain: Chaperone protein DnaJ (376 aa).

In terms of domain architecture, J spans 5–70; that stretch reads DYYEVLGVAR…EKRARYDRFG (66 aa). The CR-type zinc-finger motif lies at 137 to 215; that stretch reads GDEVTLRLPK…CKGSGQTQQV (79 aa). Zn(2+) contacts are provided by C150, C153, C167, C170, C189, C192, C203, and C206. CXXCXGXG motif repeat units follow at residues 150–157, 167–174, 189–196, and 203–210; these read CDECGGSG, CRHCGGAG, CPVCRGEG, and CPKCKGSG.

Belongs to the DnaJ family. In terms of assembly, homodimer. Requires Zn(2+) as cofactor.

The protein localises to the cytoplasm. In terms of biological role, participates actively in the response to hyperosmotic and heat shock by preventing the aggregation of stress-denatured proteins and by disaggregating proteins, also in an autonomous, DnaK-independent fashion. Unfolded proteins bind initially to DnaJ; upon interaction with the DnaJ-bound protein, DnaK hydrolyzes its bound ATP, resulting in the formation of a stable complex. GrpE releases ADP from DnaK; ATP binding to DnaK triggers the release of the substrate protein, thus completing the reaction cycle. Several rounds of ATP-dependent interactions between DnaJ, DnaK and GrpE are required for fully efficient folding. Also involved, together with DnaK and GrpE, in the DNA replication of plasmids through activation of initiation proteins. The sequence is that of Chaperone protein DnaJ from Nitratidesulfovibrio vulgaris (strain ATCC 29579 / DSM 644 / CCUG 34227 / NCIMB 8303 / VKM B-1760 / Hildenborough) (Desulfovibrio vulgaris).